We begin with the raw amino-acid sequence, 289 residues long: Protease HtpX homolog (289 aa).

A run of 2 helical transmembrane segments spans residues 10–30 (TAAL…VIGS) and 34–54 (STTP…YGYW). Histidine 138 contributes to the Zn(2+) binding site. Glutamate 139 is a catalytic residue. Residue histidine 142 participates in Zn(2+) binding. 2 helical membrane passes run 153–173 (VAAA…IFGG) and 182–202 (LAVM…QSAI). Glutamate 207 is a Zn(2+) binding site.

The protein belongs to the peptidase M48B family. The cofactor is Zn(2+).

Its subcellular location is the cell membrane. This chain is Protease HtpX homolog, found in Arthrobacter sp. (strain FB24).